We begin with the raw amino-acid sequence, 262 residues long: Tropinone reductase homolog At2g30670 (262 aa).

Position 13 to 37 (13 to 37 (LVTGGASGIGHAIVEELAGLGARIY)) interacts with NADP(+). Substrate is bound at residue Ser146. The Proton acceptor role is filled by Tyr159.

The protein belongs to the short-chain dehydrogenases/reductases (SDR) family. SDR65C subfamily.

The protein is Tropinone reductase homolog At2g30670 of Arabidopsis thaliana (Mouse-ear cress).